The primary structure comprises 300 residues: Cation-efflux pump FieF (300 aa).

4 helical membrane passes run Leu11–Trp31, Leu40–Val60, Leu81–Gly101, and Pro114–Phe134. Residues Asp45 and Asp49 each contribute to the Zn(2+) site. 2 residues coordinate Zn(2+): His153 and Asp157. The next 2 helical transmembrane spans lie at Ser156–Thr176 and Phe182–Val202.

The protein belongs to the cation diffusion facilitator (CDF) transporter (TC 2.A.4) family. FieF subfamily. In terms of assembly, homodimer.

It is found in the cell inner membrane. It catalyses the reaction Zn(2+)(in) + H(+)(out) = Zn(2+)(out) + H(+)(in). The catalysed reaction is Cd(2+)(in) + H(+)(out) = Cd(2+)(out) + H(+)(in). The enzyme catalyses Fe(2+)(in) + H(+)(out) = Fe(2+)(out) + H(+)(in). In terms of biological role, divalent metal cation transporter which exports Zn(2+), Cd(2+) and possibly Fe(2+). May be involved in zinc and iron detoxification by efflux. This Pectobacterium carotovorum subsp. carotovorum (strain PC1) protein is Cation-efflux pump FieF.